Reading from the N-terminus, the 842-residue chain is Alanine--tRNA ligase (842 aa).

Zn(2+) contacts are provided by histidine 549, histidine 553, cysteine 650, and histidine 654.

Belongs to the class-II aminoacyl-tRNA synthetase family. Requires Zn(2+) as cofactor.

Its subcellular location is the cytoplasm. The enzyme catalyses tRNA(Ala) + L-alanine + ATP = L-alanyl-tRNA(Ala) + AMP + diphosphate. Its function is as follows. Catalyzes the attachment of alanine to tRNA(Ala) in a two-step reaction: alanine is first activated by ATP to form Ala-AMP and then transferred to the acceptor end of tRNA(Ala). Also edits incorrectly charged Ser-tRNA(Ala) and Gly-tRNA(Ala) via its editing domain. This is Alanine--tRNA ligase from Campylobacter jejuni (strain RM1221).